The sequence spans 87 residues: Small ribosomal subunit protein bS20 (87 aa).

It belongs to the bacterial ribosomal protein bS20 family.

Functionally, binds directly to 16S ribosomal RNA. In Lachnoclostridium phytofermentans (strain ATCC 700394 / DSM 18823 / ISDg) (Clostridium phytofermentans), this protein is Small ribosomal subunit protein bS20.